Consider the following 375-residue polypeptide: Succinyl-diaminopimelate desuccinylase (375 aa).

His-66 is a Zn(2+) binding site. The active site involves Asp-68. Asp-99 serves as a coordination point for Zn(2+). Glu-133 acts as the Proton acceptor in catalysis. Residues Glu-134, Glu-162, and His-348 each contribute to the Zn(2+) site.

This sequence belongs to the peptidase M20A family. DapE subfamily. Homodimer. It depends on Zn(2+) as a cofactor. Co(2+) is required as a cofactor.

It carries out the reaction N-succinyl-(2S,6S)-2,6-diaminopimelate + H2O = (2S,6S)-2,6-diaminopimelate + succinate. The protein operates within amino-acid biosynthesis; L-lysine biosynthesis via DAP pathway; LL-2,6-diaminopimelate from (S)-tetrahydrodipicolinate (succinylase route): step 3/3. Functionally, catalyzes the hydrolysis of N-succinyl-L,L-diaminopimelic acid (SDAP), forming succinate and LL-2,6-diaminopimelate (DAP), an intermediate involved in the bacterial biosynthesis of lysine and meso-diaminopimelic acid, an essential component of bacterial cell walls. In Yersinia enterocolitica serotype O:8 / biotype 1B (strain NCTC 13174 / 8081), this protein is Succinyl-diaminopimelate desuccinylase.